The chain runs to 370 residues: Aspartate-semialdehyde dehydrogenase (370 aa).

NADP(+) is bound by residues 10 to 13 (RGMV), 37 to 38 (TS), and Gln-73. Arg-102 contacts phosphate. Cys-135 serves as the catalytic Acyl-thioester intermediate. Gln-162 serves as a coordination point for substrate. Residues 165-166 (SG) and Pro-193 contribute to the NADP(+) site. Glu-241 contacts substrate. Position 244 (Lys-244) interacts with phosphate. Arg-268 is a binding site for substrate. His-275 (proton acceptor) is an active-site residue. Gln-351 lines the NADP(+) pocket.

The protein belongs to the aspartate-semialdehyde dehydrogenase family. As to quaternary structure, homodimer.

It catalyses the reaction L-aspartate 4-semialdehyde + phosphate + NADP(+) = 4-phospho-L-aspartate + NADPH + H(+). The protein operates within amino-acid biosynthesis; L-lysine biosynthesis via DAP pathway; (S)-tetrahydrodipicolinate from L-aspartate: step 2/4. Its pathway is amino-acid biosynthesis; L-methionine biosynthesis via de novo pathway; L-homoserine from L-aspartate: step 2/3. It functions in the pathway amino-acid biosynthesis; L-threonine biosynthesis; L-threonine from L-aspartate: step 2/5. Catalyzes the NADPH-dependent formation of L-aspartate-semialdehyde (L-ASA) by the reductive dephosphorylation of L-aspartyl-4-phosphate. The protein is Aspartate-semialdehyde dehydrogenase (asd) of Pseudomonas aeruginosa (strain ATCC 15692 / DSM 22644 / CIP 104116 / JCM 14847 / LMG 12228 / 1C / PRS 101 / PAO1).